A 185-amino-acid polypeptide reads, in one-letter code: CASP-like protein 5A1 (185 aa).

Over 1–48 (MNVSHPAVHPVGVPPALGGQAVPPRMRMRVRMEYLVFQGMPLPGSLGG) the chain is Cytoplasmic. A helical transmembrane segment spans residues 49–69 (LMLRLGQFCSALIAFSVMVSI). The Extracellular segment spans residues 70 to 76 (RDFSVTA). Residues 77-97 (FCYLLAATVLQCLWSLALAVI) form a helical membrane-spanning segment. At 98–121 (DVYALLVKRSLRNPLLVSIFVVGD) the chain is on the cytoplasmic side. A helical membrane pass occupies residues 122-142 (GVTATLTFAAACASAGVVVLI). The Extracellular segment spans residues 143–160 (GNDISMCKSNPCANYEAA). A helical membrane pass occupies residues 161–181 (IIMAFLSWFMVSISFVLTFWM). Residues 182 to 185 (LATL) lie on the Cytoplasmic side of the membrane.

The protein belongs to the Casparian strip membrane proteins (CASP) family. In terms of assembly, homodimer and heterodimers.

The protein resides in the cell membrane. This is CASP-like protein 5A1 from Pinus contorta (Shore pine).